Consider the following 477-residue polypeptide: Glutamyl-tRNA(Gln) amidotransferase subunit A (477 aa).

Residues Lys-76 and Ser-151 each act as charge relay system in the active site. The active-site Acyl-ester intermediate is the Ser-175.

It belongs to the amidase family. GatA subfamily. Heterotrimer of A, B and C subunits.

The catalysed reaction is L-glutamyl-tRNA(Gln) + L-glutamine + ATP + H2O = L-glutaminyl-tRNA(Gln) + L-glutamate + ADP + phosphate + H(+). Its function is as follows. Allows the formation of correctly charged Gln-tRNA(Gln) through the transamidation of misacylated Glu-tRNA(Gln) in organisms which lack glutaminyl-tRNA synthetase. The reaction takes place in the presence of glutamine and ATP through an activated gamma-phospho-Glu-tRNA(Gln). The protein is Glutamyl-tRNA(Gln) amidotransferase subunit A of Chlorobium phaeobacteroides (strain BS1).